The following is a 299-amino-acid chain: NAD kinase (299 aa).

Residue aspartate 71 is the Proton acceptor of the active site. Residues 71 to 72 (DG), 145 to 146 (ND), arginine 173, aspartate 175, 186 to 191 (TAYALS), alanine 210, and glutamine 248 contribute to the NAD(+) site.

It belongs to the NAD kinase family. It depends on a divalent metal cation as a cofactor.

It is found in the cytoplasm. It catalyses the reaction NAD(+) + ATP = ADP + NADP(+) + H(+). Functionally, involved in the regulation of the intracellular balance of NAD and NADP, and is a key enzyme in the biosynthesis of NADP. Catalyzes specifically the phosphorylation on 2'-hydroxyl of the adenosine moiety of NAD to yield NADP. The protein is NAD kinase of Bordetella avium (strain 197N).